Here is a 475-residue protein sequence, read N- to C-terminus: 3-isopropylmalate dehydratase large subunit (475 aa).

[4Fe-4S] cluster contacts are provided by cysteine 352, cysteine 412, and cysteine 415.

Belongs to the aconitase/IPM isomerase family. LeuC type 1 subfamily. Heterodimer of LeuC and LeuD. Requires [4Fe-4S] cluster as cofactor.

The enzyme catalyses (2R,3S)-3-isopropylmalate = (2S)-2-isopropylmalate. The protein operates within amino-acid biosynthesis; L-leucine biosynthesis; L-leucine from 3-methyl-2-oxobutanoate: step 2/4. Its function is as follows. Catalyzes the isomerization between 2-isopropylmalate and 3-isopropylmalate, via the formation of 2-isopropylmaleate. The protein is 3-isopropylmalate dehydratase large subunit of Gluconobacter oxydans (strain 621H) (Gluconobacter suboxydans).